The primary structure comprises 124 residues: Aspartate 1-decarboxylase (124 aa).

S25 functions as the Schiff-base intermediate with substrate; via pyruvic acid in the catalytic mechanism. S25 carries the pyruvic acid (Ser) modification. A substrate-binding site is contributed by T57. Y58 (proton donor) is an active-site residue. Position 73 to 75 (73 to 75) interacts with substrate; that stretch reads GAA.

This sequence belongs to the PanD family. Heterooctamer of four alpha and four beta subunits. Pyruvate serves as cofactor. Is synthesized initially as an inactive proenzyme, which is activated by self-cleavage at a specific serine bond to produce a beta-subunit with a hydroxyl group at its C-terminus and an alpha-subunit with a pyruvoyl group at its N-terminus.

It is found in the cytoplasm. The enzyme catalyses L-aspartate + H(+) = beta-alanine + CO2. The protein operates within cofactor biosynthesis; (R)-pantothenate biosynthesis; beta-alanine from L-aspartate: step 1/1. In terms of biological role, catalyzes the pyruvoyl-dependent decarboxylation of aspartate to produce beta-alanine. This Clostridium botulinum (strain Alaska E43 / Type E3) protein is Aspartate 1-decarboxylase.